A 505-amino-acid polypeptide reads, in one-letter code: Structural protein 27 (505 aa).

3 hydrophobic regions span residues 20–40, 423–443, and 470–490; these read VSLI…FSPV, MKGI…MSTI, and IGLG…LILV.

It is found in the virion. The protein is Structural protein 27 of His1 virus (isolate Australia/Victoria) (His1V).